Consider the following 342-residue polypeptide: Ferrochelatase (342 aa).

Residues histidine 188 and glutamate 268 each contribute to the Fe cation site.

The protein belongs to the ferrochelatase family.

Its subcellular location is the cytoplasm. It catalyses the reaction heme b + 2 H(+) = protoporphyrin IX + Fe(2+). It functions in the pathway porphyrin-containing compound metabolism; protoheme biosynthesis; protoheme from protoporphyrin-IX: step 1/1. Its function is as follows. Catalyzes the ferrous insertion into protoporphyrin IX. The polypeptide is Ferrochelatase (Rickettsia prowazekii (strain Madrid E)).